Here is a 588-residue protein sequence, read N- to C-terminus: Cyclin-dependent kinase 8 (588 aa).

The region spanning 26–348 is the Protein kinase domain; that stretch reads FENSKEIGRG…CEEAMNDIYF (323 aa). Residues 32–40 and Lys60 contribute to the ATP site; that span reads IGRGTYGLV. Catalysis depends on Asp158, which acts as the Proton acceptor. 3 disordered regions span residues 376 to 426, 510 to 529, and 546 to 588; these read MTVA…GAHP, PGPS…AVPG, and MRAP…QYHR. Residues 382–426 show a composition bias toward low complexity; the sequence is QAQQQHQQQQVQMQQQPQMGQQQMMGQPQMVQPQMGQPPMGGAHP. Residues 557-588 are compositionally biased toward low complexity; it reads MPGRGMAPPQMGQQQPGPNQQQQQQWQQQYHR.

It belongs to the protein kinase superfamily. CMGC Ser/Thr protein kinase family. CDC2/CDKX subfamily. As to quaternary structure, component of the Mediator complex. Mg(2+) serves as cofactor.

The protein localises to the nucleus. The enzyme catalyses L-seryl-[protein] + ATP = O-phospho-L-seryl-[protein] + ADP + H(+). It catalyses the reaction L-threonyl-[protein] + ATP = O-phospho-L-threonyl-[protein] + ADP + H(+). It carries out the reaction [DNA-directed RNA polymerase] + ATP = phospho-[DNA-directed RNA polymerase] + ADP + H(+). In terms of biological role, component of the Mediator complex, a coactivator involved in regulated gene transcription of nearly all RNA polymerase II-dependent genes. Mediator functions as a bridge to convey information from gene-specific regulatory proteins to the basal RNA polymerase II transcription machinery. Mediator is recruited to promoters by direct interactions with regulatory proteins and serves as a scaffold for the assembly of a functional pre-initiation complex with RNA polymerase II and the general transcription factors. Phosphorylates the CTD (C-terminal domain) of the large subunit of RNA polymerase II (RNAp II), which may inhibit the formation of a transcription initiation complex. The polypeptide is Cyclin-dependent kinase 8 (cdk-8) (Caenorhabditis elegans).